Reading from the N-terminus, the 481-residue chain is UDP-N-acetylmuramoyl-L-alanyl-D-glutamate--L-lysine ligase (481 aa).

UDP-N-acetyl-alpha-D-muramoyl-L-alanyl-D-glutamate is bound at residue Ser42. An ATP-binding site is contributed by Gly118–Thr124. UDP-N-acetyl-alpha-D-muramoyl-L-alanyl-D-glutamate contacts are provided by residues Thr160–Thr161, Ser187, and Arg195. Lys229 is subject to N6-carboxylysine. Residues Asp404–Asn407 carry the L-lysine recognition motif motif.

This sequence belongs to the MurCDEF family. MurE subfamily. Post-translationally, carboxylation is probably crucial for Mg(2+) binding and, consequently, for the gamma-phosphate positioning of ATP.

The protein resides in the cytoplasm. The enzyme catalyses UDP-N-acetyl-alpha-D-muramoyl-L-alanyl-D-glutamate + L-lysine + ATP = UDP-N-acetyl-alpha-D-muramoyl-L-alanyl-gamma-D-glutamyl-L-lysine + ADP + phosphate + H(+). It participates in cell wall biogenesis; peptidoglycan biosynthesis. Catalyzes the addition of L-lysine to the nucleotide precursor UDP-N-acetylmuramoyl-L-alanyl-D-glutamate (UMAG) in the biosynthesis of bacterial cell-wall peptidoglycan. This chain is UDP-N-acetylmuramoyl-L-alanyl-D-glutamate--L-lysine ligase, found in Streptococcus sanguinis (strain SK36).